A 355-amino-acid polypeptide reads, in one-letter code: 3-dehydroquinate synthase (355 aa).

NAD(+) is bound by residues 71–76 (EGEASK), 105–109 (GVVGD), 129–130 (TS), lysine 142, lysine 151, and 169–172 (TLKT). 3 residues coordinate Zn(2+): glutamate 184, histidine 246, and histidine 263.

This sequence belongs to the sugar phosphate cyclases superfamily. Dehydroquinate synthase family. Co(2+) is required as a cofactor. Zn(2+) serves as cofactor. The cofactor is NAD(+).

Its subcellular location is the cytoplasm. It catalyses the reaction 7-phospho-2-dehydro-3-deoxy-D-arabino-heptonate = 3-dehydroquinate + phosphate. Its pathway is metabolic intermediate biosynthesis; chorismate biosynthesis; chorismate from D-erythrose 4-phosphate and phosphoenolpyruvate: step 2/7. Catalyzes the conversion of 3-deoxy-D-arabino-heptulosonate 7-phosphate (DAHP) to dehydroquinate (DHQ). This Streptococcus suis (strain 98HAH33) protein is 3-dehydroquinate synthase.